The primary structure comprises 512 residues: Mucin-13 (512 aa).

A signal peptide spans 1 to 18; sequence MKAIIHLTLLALLSVNTA. Topologically, residues 19–421 are extracellular; it reads TNQGNSADAV…GLDCKDKFQL (403 aa). Residues 22 to 38 are compositionally biased toward polar residues; sequence GNSADAVTTTETATSGP. Disordered stretches follow at residues 22–67 and 133–176; these read GNSA…PTAT and MVPS…PSNP. Over residues 53 to 67 the composition is skewed to low complexity; sequence TASTTANTPSFPTAT. The span at 135–176 shows a compositional bias: polar residues; that stretch reads PSETQSNNEMSPTTEDNQSSGPPTGTALLETSTLNSTGPSNP. Asn151 and Asn169 each carry an N-linked (GlcNAc...) asparagine glycan. The 39-residue stretch at 173–211 folds into the EGF-like 1 domain; the sequence is PSNPCQDDPCADNSLCVKLHNTSFCLCLEGYYYNSSTCK. Disulfide bonds link Cys177-Cys188, Cys182-Cys197, and Cys199-Cys210. 4 N-linked (GlcNAc...) asparagine glycosylation sites follow: Asn193, Asn206, Asn284, and Asn332. Residues 212–336 form the SEA domain; the sequence is KGKVFPGKIS…DYYGCNQTAD (125 aa). EGF-like domains follow at residues 322-361 and 363-404; these read LTLRCDYYGCNQTADDCLNGLACDCKSDLQRPNPQSPFCV and SSLK…GNCQ. 6 disulfides stabilise this stretch: Cys326–Cys338, Cys331–Cys344, Cys346–Cys360, Cys367–Cys378, Cys371–Cys389, and Cys391–Cys403. The chain crosses the membrane as a helical span at residues 422 to 442; it reads ILTIVGTIAGIVILSMIIALI. Topologically, residues 443–512 are cytoplasmic; that stretch reads VTARSNNKTK…RHSSMPRPDY (70 aa). Over residues 493–505 the composition is skewed to polar residues; it reads RDSQMQNPYSRHS. The interval 493–512 is disordered; sequence RDSQMQNPYSRHSSMPRPDY.

Homodimer of beta subunits. Post-translationally, cleaved into two subunits, alpha and beta, probably between the first EGF domain and the SEA domain. Beta subunit contains the cytoplasmic tail and alpha subunit the extracellular tail. The homooligomerization into dimers is dependent on intrachain disulfide bonds. In terms of processing, highly N-glycosylated. As to expression, highly expressed in epithelial tissues, particularly those of the gastrointestinal and respiratory tracts, such as large intestine and trachea, followed by kidney, small intestine, appendix and stomach.

The protein resides in the cell membrane. The protein localises to the apical cell membrane. It localises to the secreted. Epithelial and hemopoietic transmembrane mucin that may play a role in cell signaling. This Homo sapiens (Human) protein is Mucin-13 (MUC13).